The primary structure comprises 431 residues: Enolase (431 aa).

A (2R)-2-phosphoglycerate-binding site is contributed by Gln-166. The Proton donor role is filled by Glu-208. Asp-245, Glu-288, and Asp-315 together coordinate Mg(2+). (2R)-2-phosphoglycerate is bound by residues Lys-340, Arg-369, Ser-370, and Lys-391. Lys-340 (proton acceptor) is an active-site residue.

Belongs to the enolase family. Mg(2+) serves as cofactor.

Its subcellular location is the cytoplasm. It localises to the secreted. The protein localises to the cell surface. The catalysed reaction is (2R)-2-phosphoglycerate = phosphoenolpyruvate + H2O. Its pathway is carbohydrate degradation; glycolysis; pyruvate from D-glyceraldehyde 3-phosphate: step 4/5. Its function is as follows. Catalyzes the reversible conversion of 2-phosphoglycerate (2-PG) into phosphoenolpyruvate (PEP). It is essential for the degradation of carbohydrates via glycolysis. This is Enolase from Clostridium botulinum (strain Eklund 17B / Type B).